Here is a 467-residue protein sequence, read N- to C-terminus: Probable Xaa-Pro aminopeptidase SMAC_04549 (467 aa).

Residues aspartate 263, aspartate 274, glutamate 397, and glutamate 437 each coordinate Mn(2+).

This sequence belongs to the peptidase M24B family. It depends on Mn(2+) as a cofactor.

The catalysed reaction is Release of any N-terminal amino acid, including proline, that is linked to proline, even from a dipeptide or tripeptide.. Catalyzes the removal of a penultimate prolyl residue from the N-termini of peptides. The polypeptide is Probable Xaa-Pro aminopeptidase SMAC_04549 (Sordaria macrospora (strain ATCC MYA-333 / DSM 997 / K(L3346) / K-hell)).